A 1342-amino-acid chain; its full sequence is DNA-directed RNA polymerase subunit beta (1342 aa).

It belongs to the RNA polymerase beta chain family. The RNAP catalytic core consists of 2 alpha, 1 beta, 1 beta' and 1 omega subunit. When a sigma factor is associated with the core the holoenzyme is formed, which can initiate transcription.

The enzyme catalyses RNA(n) + a ribonucleoside 5'-triphosphate = RNA(n+1) + diphosphate. Functionally, DNA-dependent RNA polymerase catalyzes the transcription of DNA into RNA using the four ribonucleoside triphosphates as substrates. The protein is DNA-directed RNA polymerase subunit beta of Sodalis glossinidius (strain morsitans).